The chain runs to 631 residues: Phosphomethylpyrimidine synthase (631 aa).

Residues N239, M268, Y297, H333, 353–355 (SRG), 394–397 (DGLR), and E433 contribute to the substrate site. Position 437 (H437) interacts with Zn(2+). Y460 serves as a coordination point for substrate. H501 contacts Zn(2+). [4Fe-4S] cluster is bound by residues C581, C584, and C589.

The protein belongs to the ThiC family. In terms of assembly, homodimer. [4Fe-4S] cluster serves as cofactor.

The catalysed reaction is 5-amino-1-(5-phospho-beta-D-ribosyl)imidazole + S-adenosyl-L-methionine = 4-amino-2-methyl-5-(phosphooxymethyl)pyrimidine + CO + 5'-deoxyadenosine + formate + L-methionine + 3 H(+). It functions in the pathway cofactor biosynthesis; thiamine diphosphate biosynthesis. In terms of biological role, catalyzes the synthesis of the hydroxymethylpyrimidine phosphate (HMP-P) moiety of thiamine from aminoimidazole ribotide (AIR) in a radical S-adenosyl-L-methionine (SAM)-dependent reaction. The chain is Phosphomethylpyrimidine synthase from Escherichia coli O81 (strain ED1a).